Here is a 1362-residue protein sequence, read N- to C-terminus: Bromodomain-containing protein 4B (1362 aa).

Disordered regions lie at residues 22 to 57, 200 to 243, 274 to 367, 476 to 639, 699 to 941, and 953 to 1349; these read EGAQ…QPKR, SLGD…HPPA, LANH…DSKT, DEPE…SYEE, CLRK…TQSP, and SQAP…MNFQ. A compositionally biased stretch (pro residues) spans 34–49; the sequence is QPQPQTPMMQTPPPEI. The Bromo 1 domain occupies 57 to 163; it reads RQTNQLQYLL…KLFLQKISEM (107 aa). Over residues 219-234 the composition is skewed to pro residues; sequence TPTPPAVIRAPTPPQT. A compositionally biased stretch (basic and acidic residues) spans 326–342; the sequence is PRKESGRQIRPIKKTEV. The span at 348–358 shows a compositional bias: pro residues; that stretch reads PAPPDLHPQPA. A Bromo 2 domain is found at 365–474; that stretch reads SKTSEQLRYC…DVFEMRFAKM (110 aa). The segment covering 481–503 has biased composition (pro residues); the sequence is APAPVPSPAPGPPAPSIKIPPPT. The segment at 503-521 is NPS region; that stretch reads TSSDTSSDSSSDSESSSDS. Over residues 504 to 516 the composition is skewed to low complexity; that stretch reads SSDTSSDSSSDSE. Positions 542 to 597 are BID region; that stretch reads QLAALSQPQPNKPKKKEREKRKEKHKRKEEVEETRKGRIREPPAKKPKKSVQVSGG. Basic residues predominate over residues 553–568; that stretch reads KPKKKEREKRKEKHKR. The span at 569 to 585 shows a compositional bias: basic and acidic residues; it reads KEEVEETRKGRIREPPA. Over residues 606–621 the composition is skewed to pro residues; sequence PPPVTRPARPAPPPAP. The region spanning 623-707 is the NET domain; that stretch reads ESSEEDTQRC…SCLRKKRKPQ (85 aa). Residues 628–639 are compositionally biased toward basic and acidic residues; it reads DTQRCRPMSYEE. Over residues 722–737 the composition is skewed to low complexity; the sequence is SYSSSESESSSESSTS. The span at 750–766 shows a compositional bias: basic residues; the sequence is QKKKGHSGRESRKHHHP. 2 stretches are compositionally biased toward pro residues: residues 772 to 793 and 871 to 889; these read IAPP…PPPS and PARP…PHHQ. Over residues 893–905 the composition is skewed to basic residues; sequence HVHHHHHHHHHAQ. The span at 926–941 shows a compositional bias: polar residues; sequence YLQQLHKSQQPPTQSP. Composition is skewed to low complexity over residues 953 to 963, 977 to 1006, 1014 to 1028, and 1041 to 1050; these read SQAPMAAPAQS, SSAS…QPAG, QQQQ…PALQ, and HQQAKQQQVI. The C-terminal (CTD) region stretch occupies residues 1061-1361; it reads RQQKQETYPG…LMEIFEQNLF (301 aa). Residues 1086 to 1099 are compositionally biased toward pro residues; it reads QVPPYPGLTHPPSP. Residues 1186-1207 are compositionally biased toward basic and acidic residues; the sequence is PEKEKQKQEPKTPVAPKKDLKI. Residues 1224-1234 show a composition bias toward polar residues; it reads PTSAGKSTSDS. Residues 1236-1293 are compositionally biased toward basic and acidic residues; sequence ELFRRQAREKEERERALKHQAEQAERMRREQERMRTREDDDVQDQTRKAHEEARRRQE. Over residues 1308-1319 the composition is skewed to low complexity; the sequence is PAAPSPAQSSQP. The span at 1322–1334 shows a compositional bias: basic and acidic residues; the sequence is DQREMARKREQER.

This sequence belongs to the BET family.

The protein localises to the nucleus. It localises to the chromosome. Chromatin reader protein that recognizes and binds acetylated histones and plays a key role in transmission of epigenetic memory across cell divisions and transcription regulation. Remains associated with acetylated chromatin throughout the entire cell cycle and provides epigenetic memory for postmitotic G1 gene transcription by preserving acetylated chromatin status and maintaining high-order chromatin structure. During interphase, plays a key role in regulating the transcription of signal-inducible genes by associating with the P-TEFb complex and recruiting it to promoters. The polypeptide is Bromodomain-containing protein 4B (brd4-b) (Xenopus laevis (African clawed frog)).